Consider the following 398-residue polypeptide: GTP cyclohydrolase-2 (398 aa).

The tract at residues Met1–Glu172 is unknown. The GTP cyclohydrolase II stretch occupies residues Tyr173–Ala398. Arg220–Ser224 contributes to the GTP binding site. Residues Cys225, Cys236, and Cys238 each contribute to the Zn(2+) site. Residues Gln241, Glu263–Arg265, and Thr285 contribute to the GTP site. Asp297 (proton acceptor) is an active-site residue. Arg299 (nucleophile) is an active-site residue. GTP-binding residues include Ser320 and Lys325. Positions Gln375 to Ala398 are disordered.

In the C-terminal section; belongs to the GTP cyclohydrolase II family. It depends on Zn(2+) as a cofactor.

The enzyme catalyses GTP + 4 H2O = 2,5-diamino-6-hydroxy-4-(5-phosphoribosylamino)-pyrimidine + formate + 2 phosphate + 3 H(+). It functions in the pathway cofactor biosynthesis; riboflavin biosynthesis; 5-amino-6-(D-ribitylamino)uracil from GTP: step 1/4. Catalyzes the conversion of GTP to 2,5-diamino-6-ribosylamino-4(3H)-pyrimidinone 5'-phosphate (DARP), formate and pyrophosphate. The chain is GTP cyclohydrolase-2 (ribA) from Xylella fastidiosa (strain Temecula1 / ATCC 700964).